Consider the following 655-residue polypeptide: A-type voltage-gated potassium channel KCND3 (655 aa).

The Cytoplasmic portion of the chain corresponds to M1–A182. The interaction with KCNIP1 and KCNIP2 stretch occupies residues A6–P21. The segment at E70–D78 is interaction with KCNIP1. H104, C110, C131, and C132 together coordinate Zn(2+). Residue S153 is modified to Phosphoserine. A helical membrane pass occupies residues L183–T204. Residues V205 to S223 are Extracellular-facing. A helical transmembrane segment spans residues V224–F246. The Cytoplasmic portion of the chain corresponds to A247–R253. Residues F254–T277 traverse the membrane as a helical segment. The Extracellular segment spans residues N278 to S283. Residues G284–G306 form a helical; Voltage-sensor membrane-spanning segment. Residues L307–A318 are Cytoplasmic-facing. The helical transmembrane segment at S319–E343 threads the bilayer. At K344–T352 the chain is on the extracellular side. The helical intramembrane region spans S353–T366. K(+) contacts are provided by T367, L368, G369, and Y370. The short motif at T367–D372 is the Selectivity filter element. The stretch at T367–V374 is an intramembrane region. A helical membrane pass occupies residues I378–P400. Over V401–L655 the chain is Cytoplasmic. Phosphothreonine is present on T459. Positions S470–T487 are interaction with KCNIP1 and KCNIP2. The segment at I472–T487 is mediates dendritic targeting. The span at M525–S548 shows a compositional bias: polar residues. The interval M525 to T565 is disordered. A Phosphoserine; by CaMK2D modification is found at S569. S585 carries the phosphoserine modification. The segment at I615–L655 is disordered. Positions G637–S647 are enriched in polar residues.

Belongs to the potassium channel family. D (Shal) (TC 1.A.1.2) subfamily. Kv4.3/KCND3 sub-subfamily. As to quaternary structure, homotetramer. Heterotetramer with KCND2. Associates with the regulatory subunits KCNIP3 and KCNIP4. Interacts with KCNE1, KCNE2, SCN1B and KCNAB1 and DLG1. Component of heteromultimeric potassium channels. Identified in potassium channel complexes containing KCND1, KCND2, KCND3, KCNIP1, KCNIP2, KCNIP3, KCNIP4, DPP6 and DPP10. Interacts with KCNIP1; each KCNIP1 monomer interacts with two adjacent KCND3 subunits, through both the N-terminal inactivation ball of a KCND3 subunit and a C-terminal helix from the adjacent KCND3 subunit, clamping them together; this interaction stabilizes the tetrameric form and modulates the channel gating kinetics namely channel activation and inactivation kinetics and rate of recovery from inactivation. Interacts with DPP6; this interaction modulates the channel gating kinetics namely channel activation and inactivation kinetics and rate of recovery from inactivation. Interacts with KCNIP2; each KCNIP2 monomer interacts with two adjacent KCND3 subunits, through both the N-terminal inactivation ball of a KCND3 subunit and a C-terminal helix from the adjacent KCND3 subunit, clamping them together; this interaction modulates the channel gating kinetics. Post-translationally, regulated through phosphorylation at Ser-569 by CaMK2D. As to expression, highly expressed in heart and brain, in particular in cortex, cerebellum, amygdala and caudate nucleus. Detected at lower levels in liver, skeletal muscle, kidney and pancreas.

It is found in the cell membrane. Its subcellular location is the sarcolemma. The protein resides in the cell projection. The protein localises to the dendrite. It catalyses the reaction K(+)(in) = K(+)(out). Its function is as follows. Pore-forming (alpha) subunit of voltage-gated A-type potassium channels that mediates transmembrane potassium transport in excitable membranes, in brain and heart. In cardiomyocytes, may generate the transient outward potassium current I(To). In neurons, may conduct the transient subthreshold somatodendritic A-type potassium current (ISA). Kinetics properties are characterized by fast activation at subthreshold membrane potentials, rapid inactivation, and quick recovery from inactivation. Channel properties are modulated by interactions with regulatory subunits. Interaction with the regulatory subunits KCNIP1 or KCNIP2 modulates the channel gating kinetics namely channel activation and inactivation kinetics and rate of recovery from inactivation. Likewise, interaction with DPP6 modulates the channel gating kinetics namely channel activation and inactivation kinetics. The protein is A-type voltage-gated potassium channel KCND3 (KCND3) of Homo sapiens (Human).